The chain runs to 173 residues: MPKTKKVDRETLPYRPCVGLMILNGEGLVWVGHRIAEPDSEFAGTTQLWQMPQGGIDKGEEPLQAAERELYEETGMRSVSLLAEAPDWINYDLPDHLVGIAFKGRYRGQMQKWFAFRFHGDGSEIQINPPPGGHTAEFDKWSWRPMQDLPDLIVPFKRKVYEEVVAAFSHLAR.

A Nudix hydrolase domain is found at 13-166 (PYRPCVGLMI…KRKVYEEVVA (154 aa)). A Nudix box motif is present at residues 54–75 (GGIDKGEEPLQAAERELYEETG).

Belongs to the Nudix hydrolase family. RppH subfamily. Requires a divalent metal cation as cofactor.

Its function is as follows. Accelerates the degradation of transcripts by removing pyrophosphate from the 5'-end of triphosphorylated RNA, leading to a more labile monophosphorylated state that can stimulate subsequent ribonuclease cleavage. The chain is RNA pyrophosphohydrolase from Mesorhizobium japonicum (strain LMG 29417 / CECT 9101 / MAFF 303099) (Mesorhizobium loti (strain MAFF 303099)).